A 92-amino-acid chain; its full sequence is UPF0250 protein Pmen_3793 (92 aa).

Belongs to the UPF0250 family.

This chain is UPF0250 protein Pmen_3793, found in Ectopseudomonas mendocina (strain ymp) (Pseudomonas mendocina).